Consider the following 331-residue polypeptide: L-lactate dehydrogenase A chain (331 aa).

Residues 29–57 and Arg98 contribute to the NAD(+) site; that span reads GMVG…MEDK. Substrate-binding residues include Arg105, Asn137, and Arg168. Asn137 contributes to the NAD(+) binding site. His192 (proton acceptor) is an active-site residue. A substrate-binding site is contributed by Thr247.

The protein belongs to the LDH/MDH superfamily. LDH family. In terms of assembly, homotetramer.

It localises to the cytoplasm. It catalyses the reaction (S)-lactate + NAD(+) = pyruvate + NADH + H(+). Its pathway is fermentation; pyruvate fermentation to lactate; (S)-lactate from pyruvate: step 1/1. In terms of biological role, interconverts simultaneously and stereospecifically pyruvate and lactate with concomitant interconversion of NADH and NAD(+). The chain is L-lactate dehydrogenase A chain (ldha) from Gobionotothen gibberifrons (Humped rockcod).